We begin with the raw amino-acid sequence, 317 residues long: Sulfate adenylyltransferase subunit 2 (317 aa).

The span at 1-10 shows a compositional bias: basic and acidic residues; it reads MSNAVHETDS. 2 disordered regions span residues 1-21 and 298-317; these read MSNA…PPLD and RAID…EGYF.

It belongs to the PAPS reductase family. CysD subfamily. In terms of assembly, heterodimer composed of CysD, the smaller subunit, and CysN.

It carries out the reaction sulfate + ATP + H(+) = adenosine 5'-phosphosulfate + diphosphate. It functions in the pathway sulfur metabolism; hydrogen sulfide biosynthesis; sulfite from sulfate: step 1/3. With CysN forms the ATP sulfurylase (ATPS) that catalyzes the adenylation of sulfate producing adenosine 5'-phosphosulfate (APS) and diphosphate, the first enzymatic step in sulfur assimilation pathway. APS synthesis involves the formation of a high-energy phosphoric-sulfuric acid anhydride bond driven by GTP hydrolysis by CysN coupled to ATP hydrolysis by CysD. The polypeptide is Sulfate adenylyltransferase subunit 2 (Agrobacterium fabrum (strain C58 / ATCC 33970) (Agrobacterium tumefaciens (strain C58))).